Here is a 336-residue protein sequence, read N- to C-terminus: Uroporphyrinogen decarboxylase (336 aa).

Substrate-binding positions include Arg-24–Arg-28, Asp-73, Tyr-142, Ser-197, and His-312.

This sequence belongs to the uroporphyrinogen decarboxylase family. Homodimer.

The protein resides in the cytoplasm. The catalysed reaction is uroporphyrinogen III + 4 H(+) = coproporphyrinogen III + 4 CO2. It functions in the pathway porphyrin-containing compound metabolism; protoporphyrin-IX biosynthesis; coproporphyrinogen-III from 5-aminolevulinate: step 4/4. Functionally, catalyzes the decarboxylation of four acetate groups of uroporphyrinogen-III to yield coproporphyrinogen-III. This chain is Uroporphyrinogen decarboxylase, found in Chlamydia trachomatis serovar L2 (strain ATCC VR-902B / DSM 19102 / 434/Bu).